We begin with the raw amino-acid sequence, 247 residues long: 7-cyano-7-deazaguanine synthase (247 aa).

An ATP-binding site is contributed by 21 to 31 (FSGGQDSTACL). Residues C209, C224, C227, and C230 each contribute to the Zn(2+) site.

Belongs to the QueC family. Requires Zn(2+) as cofactor.

It carries out the reaction 7-carboxy-7-deazaguanine + NH4(+) + ATP = 7-cyano-7-deazaguanine + ADP + phosphate + H2O + H(+). It participates in purine metabolism; 7-cyano-7-deazaguanine biosynthesis. Its function is as follows. Catalyzes the ATP-dependent conversion of 7-carboxy-7-deazaguanine (CDG) to 7-cyano-7-deazaguanine (preQ(0)). This is 7-cyano-7-deazaguanine synthase from Halorhodospira halophila (strain DSM 244 / SL1) (Ectothiorhodospira halophila (strain DSM 244 / SL1)).